The sequence spans 259 residues: Cell division protein FtsQ (259 aa).

At 1–15 the chain is on the cytoplasmic side; sequence MTRDQTATFGRHALR. The helical transmembrane segment at 16 to 36 threads the bilayer; it reads VAGSGLLVAGVVALGLLGWQW. Residues 37–259 are Periplasmic-facing; the sequence is RANVTVDRVA…VVTRTRPLDG (223 aa). Residues 40 to 109 form the POTRA domain; that stretch reads VTVDRVAVTG…GALTISVTER (70 aa).

It belongs to the FtsQ/DivIB family. FtsQ subfamily.

The protein resides in the cell inner membrane. Functionally, essential cell division protein. The chain is Cell division protein FtsQ from Salinibacter ruber (strain DSM 13855 / M31).